The primary structure comprises 381 residues: Tafazzin (381 aa).

At 1–25 the chain is on the mitochondrial intermembrane side; sequence MSFRDVLERGDEFLEAYPRRSPLWR. An intramembrane segment occupies 26-47; it reads FLSYSTSLLTFGVSKLLLFTCY. Over 48 to 381 the chain is Mitochondrial intermembrane; it reads NVKLNGFEKL…PEGKPKGKDD (334 aa). The HXXXXD motif motif lies at 77-82; that stretch reads HMSMVD. The interval 215 to 232 is required for membrane insertion; that stretch reads LEATKPPIVVPIFATGFE.

It belongs to the taffazin family.

The protein resides in the mitochondrion outer membrane. Its subcellular location is the mitochondrion inner membrane. The enzyme catalyses 1'-[1,2-diacyl-sn-glycero-3-phospho],3'-[1-acyl-sn-glycero-3-phospho]-glycerol + a 1,2-diacyl-sn-glycero-3-phosphocholine = a cardiolipin + a 1-acyl-sn-glycero-3-phosphocholine. It carries out the reaction 1,2-di-(9Z,12Z-octadecadienoyl)-sn-glycero-3-phosphocholine + 1'-[1,2-di-(9Z,12Z-octadecadienoyl)-sn-glycero-3-phospho]-3'-[1-(9Z,12Z-octadecadienoyl)-sn-glycero-3-phospho]-glycerol = 1-(9Z,12Z)-octadecadienoyl-sn-glycero-3-phosphocholine + 1',3'-bis-[1,2-di-(9Z,12Z-octadecadienoyl)-sn-glycero-3-phospho]-glycerol. It catalyses the reaction 1'-[1,2-di-(9Z-octadecenoyl)-sn-glycero-3-phospho]-3'-[1-(9Z-octadecenoyl)-2-hexadecanoyl-sn-glycero-3-phospho]-glycerol + 1-hexadecanoyl-sn-glycero-3-phosphocholine = 1'-[1,2-di-(9Z-octadecenoyl)-sn-glycero-3-phospho]-3'-[1-(9Z-octadecenoyl)-sn-glycero-3-phospho]-glycerol + 1,2-dihexadecanoyl-sn-glycero-3-phosphocholine. The catalysed reaction is 1'-[1,2-di-(9Z-octadecenoyl)-sn-glycero-3-phospho]-3'-[1-(9Z-octadecenoyl)-2-(9Z-hexadecenoyl)-sn-glycero-3-phospho]-glycerol + 1-(9Z-hexadecenoyl)-sn-glycero-3-phosphocholine = 1,2-di-(9Z-hexadecenoyl)-sn-glycero-3-phosphocholine + 1'-[1,2-di-(9Z-octadecenoyl)-sn-glycero-3-phospho]-3'-[1-(9Z-octadecenoyl)-sn-glycero-3-phospho]-glycerol. The enzyme catalyses 1',3'-bis[1,2-di-(9Z-octadecenoyl)-sn-glycero-3-phospho]-glycerol + 1-(9Z-octadecenoyl)-sn-glycero-3-phosphocholine = 1'-[1,2-di-(9Z-octadecenoyl)-sn-glycero-3-phospho]-3'-[1-(9Z-octadecenoyl)-sn-glycero-3-phospho]-glycerol + 1,2-di-(9Z-octadecenoyl)-sn-glycero-3-phosphocholine. It carries out the reaction 1'-[1,2-di-(9Z-octadecenoyl)-sn-glycero-3-phospho]-3'-[1-(9Z-octadecenoyl)-2-(9Z,12Z-octadecadienoyl)-sn-glycero-3-phospho]-glycerol + 1-(9Z,12Z)-octadecadienoyl-sn-glycero-3-phosphocholine = 1,2-di-(9Z,12Z-octadecadienoyl)-sn-glycero-3-phosphocholine + 1'-[1,2-di-(9Z-octadecenoyl)-sn-glycero-3-phospho]-3'-[1-(9Z-octadecenoyl)-sn-glycero-3-phospho]-glycerol. It catalyses the reaction 1'-[1,2-di-(9Z-octadecenoyl)-sn-glycero-3-phospho]-3'-[1-(9Z-octadecenoyl)-2-(9Z-hexadecenoyl)-sn-glycero-3-phospho]-glycerol + 1-hexadecanoyl-sn-glycero-3-phosphocholine = 1-hexadecanoyl-2-(9Z-hexadecenoyl)-sn-glycero-3-phosphocholine + 1'-[1,2-di-(9Z-octadecenoyl)-sn-glycero-3-phospho]-3'-[1-(9Z-octadecenoyl)-sn-glycero-3-phospho]-glycerol. The catalysed reaction is 1'-[1,2-di-(9Z-octadecenoyl)-sn-glycero-3-phospho]-3'-[1-(9Z-octadecenoyl)-2-hexadecanoyl-sn-glycero-3-phospho]-glycerol + 1-(9Z-hexadecenoyl)-sn-glycero-3-phosphocholine = 1-(9Z-hexadecenoyl)-2-hexadecanoyl-sn-glycero-3-phosphocholine + 1'-[1,2-di-(9Z-octadecenoyl)-sn-glycero-3-phospho]-3'-[1-(9Z-octadecenoyl)-sn-glycero-3-phospho]-glycerol. The enzyme catalyses 2 1'-[1,2-diacyl-sn-glycero-3-phospho],3'-[1-acyl-sn-glycero-3-phospho]-glycerol = 1',3'-bis-[1-acyl-sn-glycero-3-phospho]-glycerol + a cardiolipin. It carries out the reaction 2 1'-[1,2-di-(9Z-octadecenoyl)-sn-glycero-3-phospho]-3'-[1-(9Z-octadecenoyl)-sn-glycero-3-phospho]-glycerol = 1',3'-bis-[1-(9Z-octadecenoyl)-sn-glycero-3-phospho]-glycerol + 1',3'-bis[1,2-di-(9Z-octadecenoyl)-sn-glycero-3-phospho]-glycerol. It catalyses the reaction 1,2-di-(9Z-hexadecenoyl)-sn-glycero-3-phosphocholine + 1-hexadecanoyl-sn-glycero-3-phosphocholine = 1-hexadecanoyl-2-(9Z-hexadecenoyl)-sn-glycero-3-phosphocholine + 1-(9Z-hexadecenoyl)-sn-glycero-3-phosphocholine. The catalysed reaction is 1'-[1,2-di-(9Z,12Z-octadecadienoyl)-sn-glycero-3-phospho]-3'-[1-(9Z,12Z-octadecadienoyl)-sn-glycero-3-phospho]-glycerol + 1,2-di-(9Z-octadecenoyl)-sn-glycero-3-phosphocholine = 1'-[1,2-di-(9Z,12Z-octadecadienoyl)-sn-glycero-3-phospho]-3'-[1-(9Z,12Z-octadecadienoyl)-2-(9Z-octadecenoyl)-sn-glycero-3-phospho]-glycerol + 1-(9Z-octadecenoyl)-sn-glycero-3-phosphocholine. Its pathway is phospholipid metabolism. Its function is as follows. Acyltransferase required to remodel newly synthesized phospholipid cardiolipin (1',3'-bis-[1,2-diacyl-sn-glycero-3-phospho]-glycerol or CL), a key component of the mitochondrial inner membrane, with tissue specific acyl chains necessary for adequate mitochondrial function. Its role in cellular physiology is to improve mitochondrial performance. CL is critical for the coassembly of lipids and proteins in mitochondrial membranes, for instance, remodeling of the acyl groups of CL in the mitochondrial inner membrane affects the assembly and stability of respiratory chain complex IV and its supercomplex forms. Catalyzes the transacylation between phospholipids and lysophospholipids, with the highest rate being between phosphatidylcholine (1,2-diacyl-sn-glycero-3-phosphocholine or PC) and CL. Catalyzes both 1-acyl-sn-glycero-3-phosphocholine (lysophosphatidylcholine or LPC) reacylation and PC-CL transacylation, that means, it exchanges acyl groups between CL and PC by a combination of forward and reverse transacylations. Also catalyzes transacylations between other phospholipids such as phosphatidylethanolamine (1,2-diacyl-sn-glycero-3-phosphoethanolamine or PE) and CL, between PC and PE, and between PC and phosphatidate (1,2-diacyl-sn-glycero-3-phosphate or PA), although at lower rate. Not regiospecific, it transfers acyl groups into any of the sn-1 and sn-2 positions of the monolysocardiolipin (MLCL), which is an important prerequisite for uniformity and symmetry in CL acyl distribution. Cannot transacylate dilysocardiolipin (DLCL), thus, the role of MLCL is limited to that of an acyl acceptor. CoA-independent, it can reshuffle molecular species within a single phospholipid class. Redistributes fatty acids between MLCL, CL, and other lipids, which prolongs the half-life of CL. Its action is completely reversible, which allows for cyclic changes, such as fission and fusion or bending and flattening of the membrane. Hence, by contributing to the flexibility of the lipid composition, it plays an important role in the dynamics of mitochondria membranes. Essential for the final stage of spermatogenesis, spermatid individualization. Required for the initiation of mitophagy. This Saccharomyces cerevisiae (strain ATCC 204508 / S288c) (Baker's yeast) protein is Tafazzin (TAZ1).